A 199-amino-acid polypeptide reads, in one-letter code: NADH-quinone oxidoreductase subunit I (199 aa).

2 consecutive 4Fe-4S ferredoxin-type domains span residues 45-75 (LNRHPDGLEKCIGCELCAWACPADAIYVEGA) and 91-120 (RVYQINYLRCIFCGYCIEACPTRALTMSNE). Residues cysteine 55, cysteine 58, cysteine 61, cysteine 65, cysteine 100, cysteine 103, cysteine 106, and cysteine 110 each contribute to the [4Fe-4S] cluster site. Residues 164–199 (GTPAAHMLSGEDDAASETTLDRSDDHSATYEEAERP) form a disordered region. The span at 182 to 199 (TLDRSDDHSATYEEAERP) shows a compositional bias: basic and acidic residues.

This sequence belongs to the complex I 23 kDa subunit family. As to quaternary structure, NDH-1 is composed of 14 different subunits. Subunits NuoA, H, J, K, L, M, N constitute the membrane sector of the complex. [4Fe-4S] cluster serves as cofactor.

It is found in the cell membrane. It catalyses the reaction a quinone + NADH + 5 H(+)(in) = a quinol + NAD(+) + 4 H(+)(out). Functionally, NDH-1 shuttles electrons from NADH, via FMN and iron-sulfur (Fe-S) centers, to quinones in the respiratory chain. The immediate electron acceptor for the enzyme in this species is believed to be ubiquinone. Couples the redox reaction to proton translocation (for every two electrons transferred, four hydrogen ions are translocated across the cytoplasmic membrane), and thus conserves the redox energy in a proton gradient. This is NADH-quinone oxidoreductase subunit I from Acidothermus cellulolyticus (strain ATCC 43068 / DSM 8971 / 11B).